The sequence spans 390 residues: Putative transposase y4qE (390 aa).

It belongs to the transposase IS1111A/IS1328/IS1533 family.

This is Putative transposase y4qE from Sinorhizobium fredii (strain NBRC 101917 / NGR234).